The sequence spans 469 residues: Sulfate adenylyltransferase subunit 1 (469 aa).

The region spanning Lys22–Glu237 is the tr-type G domain. Positions Gly31–Ser38 are G1. Gly31–Ser38 serves as a coordination point for GTP. The G2 stretch occupies residues Gly89 to Asp93. Residues Asp110–Gly113 are G3. GTP contacts are provided by residues Asp110–His114 and Asn165–Asp168. Residues Asn165–Asp168 are G4. The segment at Ser202–Lys204 is G5.

The protein belongs to the TRAFAC class translation factor GTPase superfamily. Classic translation factor GTPase family. CysN/NodQ subfamily. In terms of assembly, heterodimer composed of CysD, the smaller subunit, and CysN.

It carries out the reaction sulfate + ATP + H(+) = adenosine 5'-phosphosulfate + diphosphate. Its pathway is sulfur metabolism; hydrogen sulfide biosynthesis; sulfite from sulfate: step 1/3. Functionally, with CysD forms the ATP sulfurylase (ATPS) that catalyzes the adenylation of sulfate producing adenosine 5'-phosphosulfate (APS) and diphosphate, the first enzymatic step in sulfur assimilation pathway. APS synthesis involves the formation of a high-energy phosphoric-sulfuric acid anhydride bond driven by GTP hydrolysis by CysN coupled to ATP hydrolysis by CysD. The protein is Sulfate adenylyltransferase subunit 1 of Methylorubrum extorquens (strain PA1) (Methylobacterium extorquens).